The following is a 99-amino-acid chain: NADH-quinone oxidoreductase subunit K 1 (99 aa).

Transmembrane regions (helical) follow at residues 3 to 23 (PVNY…GVLV), 28 to 48 (IVVF…LVTF), and 59 to 79 (IVAF…LAII).

It belongs to the complex I subunit 4L family. NDH-1 is composed of 14 different subunits. Subunits NuoA, H, J, K, L, M, N constitute the membrane sector of the complex.

Its subcellular location is the cell membrane. The enzyme catalyses a quinone + NADH + 5 H(+)(in) = a quinol + NAD(+) + 4 H(+)(out). NDH-1 shuttles electrons from NADH, via FMN and iron-sulfur (Fe-S) centers, to quinones in the respiratory chain. The immediate electron acceptor for the enzyme in this species is believed to be a menaquinone. Couples the redox reaction to proton translocation (for every two electrons transferred, four hydrogen ions are translocated across the cytoplasmic membrane), and thus conserves the redox energy in a proton gradient. This chain is NADH-quinone oxidoreductase subunit K 1, found in Streptomyces griseus subsp. griseus (strain JCM 4626 / CBS 651.72 / NBRC 13350 / KCC S-0626 / ISP 5235).